Here is a 415-residue protein sequence, read N- to C-terminus: Coiled-coil domain-containing glutamate-rich protein 1 (415 aa).

The segment covering 1 to 11 has biased composition (basic and acidic residues); it reads MTQTLDTKEDP. Disordered regions lie at residues 1 to 20, 29 to 64, 133 to 162, 202 to 241, and 255 to 372; these read MTQT…GWAS, FGPR…QQYG, RPPG…SPPV, QEKL…GQED, and PSLV…PLEM. 2 stretches are compositionally biased toward basic residues: residues 31 to 46 and 135 to 156; these read PRRR…RPRY and PGRK…RRSA. Coiled coils occupy residues 197-224 and 264-366; these read EDMR…STAS and DEEK…EEEN. The span at 211-220 shows a compositional bias: low complexity; that stretch reads ALRAQQAQAA. Acidic residues predominate over residues 275-363; the sequence is VEEEEEGERE…EGLAEDEQTE (89 aa).

Its subcellular location is the nucleus. In terms of biological role, regulator of histone epigenetic modifications and chromatin compaction into the sperm head, required for histone-to-protamine (HTP) transition. HTP is a key event in which somatic histones are first replaced by testis-specific histone variants, then transition proteins (TNPs) are incorporated into the spermatid nucleus, and finally protamines (PRMs) replace the TNPs to promote chromatin condensation. The polypeptide is Coiled-coil domain-containing glutamate-rich protein 1 (CCER1) (Bos taurus (Bovine)).